A 274-amino-acid chain; its full sequence is 2,3,4,5-tetrahydropyridine-2,6-dicarboxylate N-succinyltransferase (274 aa).

Arg-104 and Asp-141 together coordinate substrate.

Belongs to the transferase hexapeptide repeat family. As to quaternary structure, homotrimer.

It is found in the cytoplasm. The catalysed reaction is (S)-2,3,4,5-tetrahydrodipicolinate + succinyl-CoA + H2O = (S)-2-succinylamino-6-oxoheptanedioate + CoA. The protein operates within amino-acid biosynthesis; L-lysine biosynthesis via DAP pathway; LL-2,6-diaminopimelate from (S)-tetrahydrodipicolinate (succinylase route): step 1/3. The polypeptide is 2,3,4,5-tetrahydropyridine-2,6-dicarboxylate N-succinyltransferase (Citrobacter koseri (strain ATCC BAA-895 / CDC 4225-83 / SGSC4696)).